A 273-amino-acid polypeptide reads, in one-letter code: Aquaporin NIP1-4 (273 aa).

2 helical membrane passes run Leu59 to Val79 and Val86 to Val106. The NPA 1 motif lies at Asn115–Ala117. 3 consecutive transmembrane segments (helical) span residues Ala133–Phe155, Ser174–Thr194, and Ala198–Ala218. The NPA 2 motif lies at Asn227 to Ala229. A helical transmembrane segment spans residues Trp245–Ile265.

It belongs to the MIP/aquaporin (TC 1.A.8) family. NIP (TC 1.A.8.12) subfamily. Expressed in leaves.

It is found in the membrane. Functionally, aquaporins facilitate the transport of water and small neutral solutes across cell membranes. This is Aquaporin NIP1-4 (NIP1-4) from Oryza sativa subsp. japonica (Rice).